We begin with the raw amino-acid sequence, 363 residues long: 3,4-dihydroxy-2-butanone 4-phosphate synthase (363 aa).

Positions 1–202 are DHBP synthase; sequence MSHISPIPEI…ITDLIEYRSR (202 aa). D-ribulose 5-phosphate is bound by residues 28 to 29, Asp-33, 141 to 145, and Glu-165; these read RE and RAGHT. Glu-29 is a binding site for Mg(2+). His-144 provides a ligand contact to Mg(2+). The GTP cyclohydrolase II-like stretch occupies residues 205–363; that stretch reads SLLEDMGNAP…EVVGFEEAEK (159 aa).

In the N-terminal section; belongs to the DHBP synthase family. The protein in the C-terminal section; belongs to the GTP cyclohydrolase II family. The cofactor is Mg(2+). It depends on Mn(2+) as a cofactor.

The enzyme catalyses D-ribulose 5-phosphate = (2S)-2-hydroxy-3-oxobutyl phosphate + formate + H(+). Its pathway is cofactor biosynthesis; riboflavin biosynthesis; 2-hydroxy-3-oxobutyl phosphate from D-ribulose 5-phosphate: step 1/1. In terms of biological role, catalyzes the conversion of D-ribulose 5-phosphate to formate and 3,4-dihydroxy-2-butanone 4-phosphate. The sequence is that of 3,4-dihydroxy-2-butanone 4-phosphate synthase (ribB) from Neisseria meningitidis serogroup A / serotype 4A (strain DSM 15465 / Z2491).